The sequence spans 209 residues: Casparian strip membrane protein 1 (209 aa).

At 1-46 the chain is on the cytoplasmic side; it reads MEKSESTKIDVVETNKERKGKAPLLGKAPVVAAAVVHAKGGGAKRG. The helical transmembrane segment at 47–67 threads the bilayer; that stretch reads IAIFDLILRIAAFASALGAAV. Over 68 to 96 the chain is Extracellular; the sequence is AMATTEETLPFFTQFFQFEASYDDLPTFT. The helical transmembrane segment at 97–117 threads the bilayer; it reads FFVVAMAIVVAYLVLSVPFSI. The Cytoplasmic segment spans residues 118–129; sequence VCIVRPHAVVPR. A helical membrane pass occupies residues 130–150; sequence LLLIIFDTVIIALTTGAAGSS. Residues 151-179 lie on the Extracellular side of the membrane; the sequence is AAIVYLAHNGNQDANWLAICQQFGDFCQR. The helical transmembrane segment at 180 to 200 threads the bilayer; sequence VSGAVVAAFVTVVILIFLVVL. Residues 201 to 209 lie on the Cytoplasmic side of the membrane; it reads SASALRRHH.

This sequence belongs to the Casparian strip membrane proteins (CASP) family. As to quaternary structure, homodimer and heterodimers.

It is found in the cell membrane. Regulates membrane-cell wall junctions and localized cell wall deposition. Required for establishment of the Casparian strip membrane domain (CSD) and the subsequent formation of Casparian strips, a cell wall modification of the root endodermis that determines an apoplastic barrier between the intraorganismal apoplasm and the extraorganismal apoplasm and prevents lateral diffusion. This Nicotiana tabacum (Common tobacco) protein is Casparian strip membrane protein 1.